Here is an 89-residue protein sequence, read N- to C-terminus: Small ribosomal subunit protein uS15 (89 aa).

This sequence belongs to the universal ribosomal protein uS15 family. Part of the 30S ribosomal subunit. Forms a bridge to the 50S subunit in the 70S ribosome, contacting the 23S rRNA.

Its function is as follows. One of the primary rRNA binding proteins, it binds directly to 16S rRNA where it helps nucleate assembly of the platform of the 30S subunit by binding and bridging several RNA helices of the 16S rRNA. Forms an intersubunit bridge (bridge B4) with the 23S rRNA of the 50S subunit in the ribosome. The sequence is that of Small ribosomal subunit protein uS15 from Photorhabdus luminescens (Xenorhabdus luminescens).